The following is a 215-amino-acid chain: 2-dehydro-3-deoxy-phosphogluconate aldolase (215 aa).

Glu-46 (proton acceptor) is an active-site residue. Pyruvate is bound by residues Arg-50, Thr-74, and Lys-134. Lys-134 functions as the Schiff-base intermediate with substrate in the catalytic mechanism.

It belongs to the KHG/KDPG aldolase family. In terms of assembly, homotrimer.

The enzyme catalyses 2-dehydro-3-deoxy-6-phospho-D-gluconate = D-glyceraldehyde 3-phosphate + pyruvate. It functions in the pathway carbohydrate acid metabolism; 2-dehydro-3-deoxy-D-gluconate degradation; D-glyceraldehyde 3-phosphate and pyruvate from 2-dehydro-3-deoxy-D-gluconate: step 2/2. Functionally, involved in the degradation of glucose via the Entner-Doudoroff pathway. Catalyzes the reversible, stereospecific retro-aldol cleavage of 2-keto-3-deoxy-6-phosphogluconate (KDPG) to pyruvate and D-glyceraldehyde-3-phosphate. Involved in the degradation of 3,6-anhydro-L-galactose (L-AnG), which is the major monomeric sugar of red macroalgae. The cleavage of KDPG to glyceraldehyde 3-phosphate and pyruvate is the sixth step of this pathway. The sequence is that of 2-dehydro-3-deoxy-phosphogluconate aldolase from Pseudoalteromonas atlantica (strain T6c / ATCC BAA-1087).